The primary structure comprises 279 residues: Octanoyl-[GcvH]:protein N-octanoyltransferase (279 aa).

Residues Glu-48–Val-253 enclose the BPL/LPL catalytic domain. Catalysis depends on Cys-152, which acts as the Acyl-thioester intermediate.

The protein belongs to the octanoyltransferase LipL family.

The enzyme catalyses N(6)-octanoyl-L-lysyl-[glycine-cleavage complex H protein] + L-lysyl-[lipoyl-carrier protein] = N(6)-octanoyl-L-lysyl-[lipoyl-carrier protein] + L-lysyl-[glycine-cleavage complex H protein]. The protein operates within protein modification; protein lipoylation via endogenous pathway; protein N(6)-(lipoyl)lysine from octanoyl-[acyl-carrier-protein]. Catalyzes the amidotransfer (transamidation) of the octanoyl moiety from octanoyl-GcvH to the lipoyl domain of the E2 subunit of lipoate-dependent enzymes. The sequence is that of Octanoyl-[GcvH]:protein N-octanoyltransferase from Oceanobacillus iheyensis (strain DSM 14371 / CIP 107618 / JCM 11309 / KCTC 3954 / HTE831).